Consider the following 382-residue polypeptide: Anhydro-N-acetylmuramic acid kinase (382 aa).

15-22 contributes to the ATP binding site; sequence GTSLDGVD.

It belongs to the anhydro-N-acetylmuramic acid kinase family.

It catalyses the reaction 1,6-anhydro-N-acetyl-beta-muramate + ATP + H2O = N-acetyl-D-muramate 6-phosphate + ADP + H(+). It functions in the pathway amino-sugar metabolism; 1,6-anhydro-N-acetylmuramate degradation. Its pathway is cell wall biogenesis; peptidoglycan recycling. Its function is as follows. Catalyzes the specific phosphorylation of 1,6-anhydro-N-acetylmuramic acid (anhMurNAc) with the simultaneous cleavage of the 1,6-anhydro ring, generating MurNAc-6-P. Is required for the utilization of anhMurNAc either imported from the medium or derived from its own cell wall murein, and thus plays a role in cell wall recycling. This chain is Anhydro-N-acetylmuramic acid kinase, found in Haemophilus influenzae (strain ATCC 51907 / DSM 11121 / KW20 / Rd).